Reading from the N-terminus, the 219-residue chain is MATSMIPIFVTFMLVAAHMALADTNMLQDFCVADLSNGLKVNGYPCKDPAKVTPEDFYFIGLATAAATANSSMGSAVTGANVEKVPGLNTLGVSISRIDYAPGGLNPPHLHPRASEAIFVLEGRLFVGFLTTTGKLISKHVNKGDVFVFPKALLHFQQNPNKAPASVLAAFDSQLPGTQVVGPSLFGSNPPIPDDLLAKAFGAAAPEIQKIKGKFPPKK.

Residues 1–22 form the signal peptide; sequence MATSMIPIFVTFMLVAAHMALA. A disulfide bridge links C31 with C46. The Cupin type-1 domain maps to 60–209; the sequence is IGLATAAATA…AFGAAAPEIQ (150 aa). N70 carries an N-linked (GlcNAc...) asparagine glycan. Mn(2+) contacts are provided by H109, H111, E116, and H155.

The protein belongs to the germin family. As to quaternary structure, oligomer (believed to be a pentamer but probably hexamer).

It localises to the secreted. Its subcellular location is the extracellular space. It is found in the apoplast. Its function is as follows. May play a role in plant defense. Probably has no oxalate oxidase activity even if the active site is conserved. The polypeptide is Germin-like protein subfamily 2 member 3 (GLP8) (Arabidopsis thaliana (Mouse-ear cress)).